The sequence spans 245 residues: Superoxide dismutase [Mn], mitochondrial (245 aa).

The transit peptide at Met1–Ala32 directs the protein to the mitochondrion. The Mn(2+) site is built by His58, His106, Asp196, and His200.

Belongs to the iron/manganese superoxide dismutase family. In terms of assembly, homotetramer. It depends on Mn(2+) as a cofactor.

The protein localises to the mitochondrion matrix. The catalysed reaction is 2 superoxide + 2 H(+) = H2O2 + O2. Its function is as follows. Destroys superoxide anion radicals which are normally produced within the cells and which are toxic to biological systems. In Neurospora crassa (strain ATCC 24698 / 74-OR23-1A / CBS 708.71 / DSM 1257 / FGSC 987), this protein is Superoxide dismutase [Mn], mitochondrial (sod-2).